We begin with the raw amino-acid sequence, 706 residues long: Polyribonucleotide nucleotidyltransferase (706 aa).

Mg(2+)-binding residues include Asp487 and Asp493. Positions 554-613 (PRIHTMKISSDKIKDVIGKGGAVIRALCEETGTTIEIEDDGTIKIAATEGAAAKEAIRRI) constitute a KH domain. In terms of domain architecture, S1 motif spans 623–691 (GRIYQGKVAR…RQGRVRLSMK (69 aa)).

It belongs to the polyribonucleotide nucleotidyltransferase family. As to quaternary structure, component of the RNA degradosome, which is a multiprotein complex involved in RNA processing and mRNA degradation. Mg(2+) is required as a cofactor.

Its subcellular location is the cytoplasm. It carries out the reaction RNA(n+1) + phosphate = RNA(n) + a ribonucleoside 5'-diphosphate. Functionally, involved in mRNA degradation. Catalyzes the phosphorolysis of single-stranded polyribonucleotides processively in the 3'- to 5'-direction. This Vibrio atlanticus (strain LGP32) (Vibrio splendidus (strain Mel32)) protein is Polyribonucleotide nucleotidyltransferase.